We begin with the raw amino-acid sequence, 185 residues long: Threonylcarbamoyl-AMP synthase (185 aa).

Residues 4–185 (SWRVQQAAQD…IATGQVMRAG (182 aa)) enclose the YrdC-like domain.

It belongs to the SUA5 family. TsaC subfamily.

It localises to the cytoplasm. The catalysed reaction is L-threonine + hydrogencarbonate + ATP = L-threonylcarbamoyladenylate + diphosphate + H2O. In terms of biological role, required for the formation of a threonylcarbamoyl group on adenosine at position 37 (t(6)A37) in tRNAs that read codons beginning with adenine. Catalyzes the conversion of L-threonine, HCO(3)(-)/CO(2) and ATP to give threonylcarbamoyl-AMP (TC-AMP) as the acyladenylate intermediate, with the release of diphosphate. This Pseudomonas savastanoi pv. phaseolicola (strain 1448A / Race 6) (Pseudomonas syringae pv. phaseolicola (strain 1448A / Race 6)) protein is Threonylcarbamoyl-AMP synthase.